The primary structure comprises 82 residues: uncharacterized protein (82 aa).

Functionally, this protein may be involved in virus assembly. This is an uncharacterized protein from Sulfolobus spindle-shape virus 1 (SSV1).